The primary structure comprises 355 residues: UDP-glucose 4-epimerase uge1 (355 aa).

An NAD(+)-binding site is contributed by 8–39 (TVLVTGGAGYIGSHTCVVLLEKGYDVVIVDNL).

The protein belongs to the NAD(P)-dependent epimerase/dehydratase family. NAD(+) is required as a cofactor.

It carries out the reaction UDP-alpha-D-glucose = UDP-alpha-D-galactose. It functions in the pathway carbohydrate metabolism; galactose metabolism. Its function is as follows. Major UDP-glucose/-galactose 4-epimerase under glucose-rich conditions involved in protein galactosylation. The protein is UDP-glucose 4-epimerase uge1 (uge1) of Schizosaccharomyces pombe (strain 972 / ATCC 24843) (Fission yeast).